Consider the following 330-residue polypeptide: DNA-directed RNA polymerase subunit alpha (330 aa).

Residues 1 to 236 form an alpha N-terminal domain (alpha-NTD) region; sequence MQNSVIEFLK…EQLEAFIDLR (236 aa). An alpha C-terminal domain (alpha-CTD) region spans residues 250-330; it reads FDPILLRLVD…NWPPTNILDN (81 aa).

This sequence belongs to the RNA polymerase alpha chain family. As to quaternary structure, homodimer. The RNAP catalytic core consists of 2 alpha, 1 beta, 1 beta' and 1 omega subunit. When a sigma factor is associated with the core the holoenzyme is formed, which can initiate transcription.

It catalyses the reaction RNA(n) + a ribonucleoside 5'-triphosphate = RNA(n+1) + diphosphate. Functionally, DNA-dependent RNA polymerase catalyzes the transcription of DNA into RNA using the four ribonucleoside triphosphates as substrates. The chain is DNA-directed RNA polymerase subunit alpha from Blochmanniella pennsylvanica (strain BPEN).